We begin with the raw amino-acid sequence, 347 residues long: Isopentenyl-diphosphate delta-isomerase (347 aa).

Residues 1-31 (MDESNSQFEKRKRDHIRIALDPRSQTDGQNG) form a disordered region. Residues 8–20 (FEKRKRDHIRIAL) show a composition bias toward basic and acidic residues. 11–12 (RK) provides a ligand contact to substrate. Residues Ser72, 73 to 75 (SMT), Ser103, and Asn132 contribute to the FMN site. Substrate is bound at residue 103-105 (SQR). Gln166 provides a ligand contact to substrate. Residue Glu167 participates in Mg(2+) binding. FMN is bound by residues Lys198, Ser223, Thr228, 279-281 (GVR), and 300-301 (AK).

This sequence belongs to the IPP isomerase type 2 family. In terms of assembly, homooctamer. Dimer of tetramers. Requires FMN as cofactor. NADPH is required as a cofactor. The cofactor is Mg(2+).

Its subcellular location is the cytoplasm. The catalysed reaction is isopentenyl diphosphate = dimethylallyl diphosphate. Functionally, involved in the biosynthesis of isoprenoids. Catalyzes the 1,3-allylic rearrangement of the homoallylic substrate isopentenyl (IPP) to its allylic isomer, dimethylallyl diphosphate (DMAPP). The protein is Isopentenyl-diphosphate delta-isomerase of Bdellovibrio bacteriovorus (strain ATCC 15356 / DSM 50701 / NCIMB 9529 / HD100).